Consider the following 86-residue polypeptide: Heat shock factor-binding protein (86 aa).

Residues 34-63 (MSDSIITKIDDMGGRINELEQSINDLRAEM) adopt a coiled-coil conformation. The segment at 42–52 (IDDMGGRINEL) is required for interactions with heat shock factors (HSFs). The interval 59-86 (LRAEMGVEGTPPPASKSGDEPKTPASSS) is disordered.

The protein belongs to the HSBP1 family. As to quaternary structure, homohexamer. Interacts with HSFA1A, HSFA1B and HSFA2. As to expression, mostly expressed in siliques and flowers, and, to a lower extent, in roots, stems and leaves.

The protein resides in the nucleus. It is found in the cytoplasm. It localises to the cytosol. In terms of biological role, negative regulator of the heat shock (HS) response. Affects negatively HSFA1B DNA-binding capacity in vitro. Involved in acquired thermotolerance but not basal thermotolerance. Crucial for seed development, after fertilization and during embryogenesis. The chain is Heat shock factor-binding protein from Arabidopsis thaliana (Mouse-ear cress).